A 347-amino-acid polypeptide reads, in one-letter code: Glutamyl-Q tRNA(Asp) synthetase (347 aa).

L-glutamate-binding positions include 31–35 and Glu67; that span reads RFAPS. The 'HIGH' region motif lies at 34 to 44; that stretch reads PSPTSALHLGN. Zn(2+) is bound by residues Cys121, Cys123, Tyr143, and Cys147. Residues Tyr203 and Arg221 each coordinate L-glutamate. The 'KMSKS' region motif lies at 259–263; it reads RLSKS. Lys262 contacts ATP.

Belongs to the class-I aminoacyl-tRNA synthetase family. GluQ subfamily. The cofactor is Zn(2+).

Its function is as follows. Catalyzes the tRNA-independent activation of glutamate in presence of ATP and the subsequent transfer of glutamate onto a tRNA(Asp). Glutamate is transferred on the 2-amino-5-(4,5-dihydroxy-2-cyclopenten-1-yl) moiety of the queuosine in the wobble position of the QUC anticodon. In Cutibacterium acnes (strain DSM 16379 / KPA171202) (Propionibacterium acnes), this protein is Glutamyl-Q tRNA(Asp) synthetase.